The primary structure comprises 264 residues: Thiazole synthase (264 aa).

Residue K106 is the Schiff-base intermediate with DXP of the active site. 1-deoxy-D-xylulose 5-phosphate is bound by residues G167, 193–194 (AG), and 215–216 (NS).

The protein belongs to the ThiG family. As to quaternary structure, homotetramer. Forms heterodimers with either ThiH or ThiS.

It is found in the cytoplasm. The catalysed reaction is [ThiS sulfur-carrier protein]-C-terminal-Gly-aminoethanethioate + 2-iminoacetate + 1-deoxy-D-xylulose 5-phosphate = [ThiS sulfur-carrier protein]-C-terminal Gly-Gly + 2-[(2R,5Z)-2-carboxy-4-methylthiazol-5(2H)-ylidene]ethyl phosphate + 2 H2O + H(+). Its pathway is cofactor biosynthesis; thiamine diphosphate biosynthesis. Functionally, catalyzes the rearrangement of 1-deoxy-D-xylulose 5-phosphate (DXP) to produce the thiazole phosphate moiety of thiamine. Sulfur is provided by the thiocarboxylate moiety of the carrier protein ThiS. In vitro, sulfur can be provided by H(2)S. This chain is Thiazole synthase, found in Azotobacter vinelandii (strain DJ / ATCC BAA-1303).